The primary structure comprises 869 residues: Bifunctional uridylyltransferase/uridylyl-removing enzyme (869 aa).

Residues 1–332 (MTATPADRPD…QFDGEAVPVQ (332 aa)) form a uridylyltransferase region. The interval 333–691 (LDAGFSLRRG…RRAVPDNDAL (359 aa)) is uridylyl-removing. The 123-residue stretch at 450–572 (VDQHTLMVLR…VGTRERLDYL (123 aa)) folds into the HD domain. ACT domains follow at residues 692–771 (EVFV…PSRR) and 798–869 (RISL…LDPT).

Belongs to the GlnD family. Mg(2+) serves as cofactor.

The enzyme catalyses [protein-PII]-L-tyrosine + UTP = [protein-PII]-uridylyl-L-tyrosine + diphosphate. The catalysed reaction is [protein-PII]-uridylyl-L-tyrosine + H2O = [protein-PII]-L-tyrosine + UMP + H(+). With respect to regulation, uridylyltransferase (UTase) activity is inhibited by glutamine, while glutamine activates uridylyl-removing (UR) activity. In terms of biological role, modifies, by uridylylation and deuridylylation, the PII regulatory proteins (GlnB and homologs), in response to the nitrogen status of the cell that GlnD senses through the glutamine level. Under low glutamine levels, catalyzes the conversion of the PII proteins and UTP to PII-UMP and PPi, while under higher glutamine levels, GlnD hydrolyzes PII-UMP to PII and UMP (deuridylylation). Thus, controls uridylylation state and activity of the PII proteins, and plays an important role in the regulation of nitrogen assimilation and metabolism. The sequence is that of Bifunctional uridylyltransferase/uridylyl-removing enzyme from Xanthomonas campestris pv. campestris (strain 8004).